The primary structure comprises 368 residues: tRNA-specific 2-thiouridylase MnmA (368 aa).

ATP is bound by residues 11 to 18 and M37; that span reads GMSGGVDS. Residues 97-99 form an interaction with target base in tRNA region; the sequence is NPD. Residue C102 is the Nucleophile of the active site. Cysteines 102 and 199 form a disulfide. G127 contributes to the ATP binding site. The segment at 149 to 151 is interaction with tRNA; that stretch reads KDQ. C199 acts as the Cysteine persulfide intermediate in catalysis. The interaction with tRNA stretch occupies residues 311-312; that stretch reads RY.

This sequence belongs to the MnmA/TRMU family. As to quaternary structure, interacts with TusE.

It is found in the cytoplasm. It carries out the reaction S-sulfanyl-L-cysteinyl-[protein] + uridine(34) in tRNA + AH2 + ATP = 2-thiouridine(34) in tRNA + L-cysteinyl-[protein] + A + AMP + diphosphate + H(+). In terms of biological role, catalyzes the 2-thiolation of uridine at the wobble position (U34) of tRNA(Lys), tRNA(Glu) and tRNA(Gln), leading to the formation of s(2)U34, the first step of tRNA-mnm(5)s(2)U34 synthesis. Sulfur is provided by IscS, via a sulfur-relay system. Binds ATP and its substrate tRNAs. This chain is tRNA-specific 2-thiouridylase MnmA, found in Shigella boydii serotype 18 (strain CDC 3083-94 / BS512).